The sequence spans 143 residues: Transcriptional regulator SlyA (143 aa).

The HTH marR-type domain maps to 2 to 135 (ESTLGSDLAR…LSGLIDKLER (134 aa)). The segment at residues 49–72 (QIQLAKAIGIEQPSLVRTLDQLEE) is a DNA-binding region (H-T-H motif).

The protein belongs to the SlyA family. In terms of assembly, homodimer.

Functionally, transcription regulator that can specifically activate or repress expression of target genes. This chain is Transcriptional regulator SlyA, found in Yersinia enterocolitica serotype O:8 / biotype 1B (strain NCTC 13174 / 8081).